A 360-amino-acid chain; its full sequence is MKRDIQELLNPALRDLKAYNVEGGQQAGIKLNQNESPFDLPLWLKEEVLEAFEKEPWNRYPDILPFRGMRSYASFVGVPADAVMMSNGSNEMLYTIFLACLGPGKKILIPEPSFSLYEKIARLLHTEVVFVPMLPGLAFDADAIIRKAGEERVDFIVLSTPNNPTGMSLASEEVCRIAEAADALVLVDEAYIEFSRQKSVVAEIARLKNLIVLRTMSKALALAGMRIGFAIADPALMAEIAKPKIPFASSRLSEITLQRVLANYYLVTDAVSYILHERERLSTELKGIGGVELYESDTNFIIIRVRHAHELFCELSRRDILVRDVSGYPLMENCLRFNIGLRDENDALLQQLRLLCDEPV.

An N6-(pyridoxal phosphate)lysine modification is found at Lys218.

The protein belongs to the class-II pyridoxal-phosphate-dependent aminotransferase family. Histidinol-phosphate aminotransferase subfamily. As to quaternary structure, homodimer. It depends on pyridoxal 5'-phosphate as a cofactor.

It carries out the reaction L-histidinol phosphate + 2-oxoglutarate = 3-(imidazol-4-yl)-2-oxopropyl phosphate + L-glutamate. The protein operates within amino-acid biosynthesis; L-histidine biosynthesis; L-histidine from 5-phospho-alpha-D-ribose 1-diphosphate: step 7/9. The chain is Histidinol-phosphate aminotransferase from Chlorobium phaeobacteroides (strain DSM 266 / SMG 266 / 2430).